A 382-amino-acid chain; its full sequence is Proton extrusion protein PxcA (382 aa).

A run of 4 helical transmembrane segments spans residues 162 to 182, 257 to 277, 305 to 325, and 340 to 360; these read ILLL…TYIV, AIKN…VCLV, IILF…TVLL, and FILL…KYWI.

The protein belongs to the CemA family.

The protein resides in the cell inner membrane. Its function is as follows. Required for H(+) efflux immediately after light irradiation to form a rapid H(+) concentration gradient across the thylakoid membranes. Together with PxcL, contributes to transient H(+) uptake following dark to light transition. The chain is Proton extrusion protein PxcA from Parasynechococcus marenigrum (strain WH8102).